The chain runs to 217 residues: Large ribosomal subunit protein uL1 (217 aa).

It belongs to the universal ribosomal protein uL1 family. In terms of assembly, part of the 50S ribosomal subunit.

Binds directly to 23S rRNA. Probably involved in E site tRNA release. In terms of biological role, protein L1 is also a translational repressor protein, it controls the translation of its operon by binding to its mRNA. In Hyperthermus butylicus (strain DSM 5456 / JCM 9403 / PLM1-5), this protein is Large ribosomal subunit protein uL1.